The primary structure comprises 406 residues: Serine hydroxymethyltransferase (406 aa).

(6S)-5,6,7,8-tetrahydrofolate-binding positions include L111 and 115–117; that span reads GHL. K220 carries the N6-(pyridoxal phosphate)lysine modification. Residue 340-342 participates in (6S)-5,6,7,8-tetrahydrofolate binding; that stretch reads SAF.

The protein belongs to the SHMT family. As to quaternary structure, homodimer. It depends on pyridoxal 5'-phosphate as a cofactor.

It is found in the cytoplasm. The catalysed reaction is (6R)-5,10-methylene-5,6,7,8-tetrahydrofolate + glycine + H2O = (6S)-5,6,7,8-tetrahydrofolate + L-serine. The protein operates within one-carbon metabolism; tetrahydrofolate interconversion. Its pathway is amino-acid biosynthesis; glycine biosynthesis; glycine from L-serine: step 1/1. Functionally, catalyzes the reversible interconversion of serine and glycine with tetrahydrofolate (THF) serving as the one-carbon carrier. This reaction serves as the major source of one-carbon groups required for the biosynthesis of purines, thymidylate, methionine, and other important biomolecules. Also exhibits THF-independent aldolase activity toward beta-hydroxyamino acids, producing glycine and aldehydes, via a retro-aldol mechanism. This chain is Serine hydroxymethyltransferase, found in Mycoplasma genitalium (strain ATCC 33530 / DSM 19775 / NCTC 10195 / G37) (Mycoplasmoides genitalium).